The following is a 143-amino-acid chain: Transcription antitermination protein NusB (143 aa).

It belongs to the NusB family.

In terms of biological role, involved in transcription antitermination. Required for transcription of ribosomal RNA (rRNA) genes. Binds specifically to the boxA antiterminator sequence of the ribosomal RNA (rrn) operons. The protein is Transcription antitermination protein NusB of Clostridium botulinum (strain Kyoto / Type A2).